A 228-amino-acid polypeptide reads, in one-letter code: Small ribosomal subunit protein uS3 (228 aa).

The region spanning 39–107 is the KH type-2 domain; that stretch reads VREYLQDKLK…PVHINIEEIR (69 aa).

This sequence belongs to the universal ribosomal protein uS3 family. As to quaternary structure, part of the 30S ribosomal subunit. Forms a tight complex with proteins S10 and S14.

Its function is as follows. Binds the lower part of the 30S subunit head. Binds mRNA in the 70S ribosome, positioning it for translation. The polypeptide is Small ribosomal subunit protein uS3 (Stutzerimonas stutzeri (strain A1501) (Pseudomonas stutzeri)).